Consider the following 396-residue polypeptide: Ribosomal RNA large subunit methyltransferase I (396 aa).

A PUA domain is found at 2–81; it reads SVRLVLAKGR…ESIDIAFFTR (80 aa).

The protein belongs to the methyltransferase superfamily. RlmI family.

Its subcellular location is the cytoplasm. It carries out the reaction cytidine(1962) in 23S rRNA + S-adenosyl-L-methionine = 5-methylcytidine(1962) in 23S rRNA + S-adenosyl-L-homocysteine + H(+). In terms of biological role, specifically methylates the cytosine at position 1962 (m5C1962) of 23S rRNA. This chain is Ribosomal RNA large subunit methyltransferase I, found in Escherichia coli (strain UTI89 / UPEC).